The sequence spans 270 residues: 4-hydroxy-tetrahydrodipicolinate reductase (270 aa).

NAD(+) contacts are provided by residues 9–14 (GAGGRM) and E35. R36 contacts NADP(+). Residues 99-101 (GTT) and 123-126 (ASNF) each bind NAD(+). Catalysis depends on H156, which acts as the Proton donor/acceptor. H157 is a (S)-2,3,4,5-tetrahydrodipicolinate binding site. Residue K160 is the Proton donor of the active site. Residue 166 to 167 (GT) participates in (S)-2,3,4,5-tetrahydrodipicolinate binding.

It belongs to the DapB family.

Its subcellular location is the cytoplasm. It carries out the reaction (S)-2,3,4,5-tetrahydrodipicolinate + NAD(+) + H2O = (2S,4S)-4-hydroxy-2,3,4,5-tetrahydrodipicolinate + NADH + H(+). The catalysed reaction is (S)-2,3,4,5-tetrahydrodipicolinate + NADP(+) + H2O = (2S,4S)-4-hydroxy-2,3,4,5-tetrahydrodipicolinate + NADPH + H(+). The protein operates within amino-acid biosynthesis; L-lysine biosynthesis via DAP pathway; (S)-tetrahydrodipicolinate from L-aspartate: step 4/4. Catalyzes the conversion of 4-hydroxy-tetrahydrodipicolinate (HTPA) to tetrahydrodipicolinate. The protein is 4-hydroxy-tetrahydrodipicolinate reductase of Haemophilus influenzae (strain PittGG).